The chain runs to 250 residues: Phosphonates import ATP-binding protein PhnC (250 aa).

Positions 2-247 (ILFNNVNKVW…KLDAQAMKKI (246 aa)) constitute an ABC transporter domain. 35–42 (GLSGAGKT) provides a ligand contact to ATP.

Belongs to the ABC transporter superfamily. Phosphonates importer (TC 3.A.1.9.1) family. The complex is composed of two ATP-binding proteins (PhnC), two transmembrane proteins (PhnE) and a solute-binding protein (PhnD).

It localises to the cell membrane. The enzyme catalyses phosphonate(out) + ATP + H2O = phosphonate(in) + ADP + phosphate + H(+). In terms of biological role, part of the ABC transporter complex PhnCDE involved in phosphonates import. Responsible for energy coupling to the transport system. This chain is Phosphonates import ATP-binding protein PhnC, found in Mycoplasma capricolum subsp. capricolum (strain California kid / ATCC 27343 / NCTC 10154).